We begin with the raw amino-acid sequence, 156 residues long: Arginine repressor (156 aa).

It belongs to the ArgR family.

The protein localises to the cytoplasm. It participates in amino-acid biosynthesis; L-arginine biosynthesis [regulation]. Regulates arginine biosynthesis genes. The polypeptide is Arginine repressor (Shewanella sediminis (strain HAW-EB3)).